Here is a 267-residue protein sequence, read N- to C-terminus: Diphthine--ammonia ligase (267 aa).

A Phosphotyrosine modification is found at tyrosine 97.

The protein belongs to the Diphthine--ammonia ligase family.

The enzyme catalyses diphthine-[translation elongation factor 2] + NH4(+) + ATP = diphthamide-[translation elongation factor 2] + AMP + diphosphate + H(+). The protein operates within protein modification; peptidyl-diphthamide biosynthesis. Amidase that may catalyze the last step of diphthamide biosynthesis using ammonium and ATP. Diphthamide biosynthesis consists in the conversion of an L-histidine residue in the translation elongation factor (EEF2) to diphthamide. The chain is Diphthine--ammonia ligase from Homo sapiens (Human).